Consider the following 605-residue polypeptide: Glucose oxidase (605 aa).

Positions 1 to 16 (MKTILSSSLVVSMAAA) are cleaved as a signal peptide. Positions 51 and 52 each coordinate FAD. N-linked (GlcNAc...) asparagine glycosylation is present at Asn65. Glu72 serves as a coordination point for FAD. A glycan (N-linked (GlcNAc...) asparagine) is linked at Asn111. 4 residues coordinate FAD: Ser125, Asn129, Gly130, and Thr132. Residues Cys186 and Cys228 are joined by a disulfide bond. Asn190 carries N-linked (GlcNAc...) asparagine glycosylation. Residue Val272 participates in FAD binding. N-linked (GlcNAc...) asparagine glycans are attached at residues Asn280, Asn377, Asn410, and Asn495. The active-site Proton acceptor is His538. Arg559 and Val560 together coordinate O2. FAD is bound by residues Gly571 and Met583.

The protein belongs to the GMC oxidoreductase family. Homodimer. It depends on FAD as a cofactor.

The protein resides in the secreted. It localises to the cell wall. It is found in the cytoplasm. Its subcellular location is the extracellular space. The protein localises to the extracellular matrix. The enzyme catalyses beta-D-glucose + O2 = D-glucono-1,5-lactone + H2O2. In terms of biological role, glucose oxidase catalyzes the oxidation of beta-D-glucose to D-glucono-delta-lactone and hydrogen peroxide in the presence of molecular oxygen. Acts as a critical factor modulating pathogenicity by controlling transcription of genes important for fungal secondary metabolism and infection such as those coding for enzymes involved in degradation of the host cell wall. This Aspergillus carbonarius (strain ITEM 5010) protein is Glucose oxidase.